The primary structure comprises 455 residues: Golgi pH regulator (455 aa).

The next 5 helical transmembrane spans lie at 5–25, 46–66, 79–99, 114–134, and 150–170; these read IDSSIMVTSQILFFGFGWLFF, VTFAFSCTMFELIIFEILGVL, LCVILLILVFMVPFYIGYFIV, CLLWLTFMYFFWKLGDPFPIL, and VGVIGVTLMALLSGFGAVNCP. Asn180 and Asn243 each carry an N-linked (GlcNAc...) asparagine glycan. 4 helical membrane passes run 290–310, 343–363, 378–398, and 425–445; these read GYFFSIYCVWKIFMATINIVL, ISFILVGIIIVSSIRGLLITL, VIVLLLAQIMGMYFVSSVLLI, and WFDVIFLVSALSSILFLYLAH.

This sequence belongs to the Golgi pH regulator (TC 1.A.38) family. As to quaternary structure, homotrimer. Interacts with RABL3; the interaction stabilizes GPR89B.

It is found in the golgi apparatus membrane. It catalyses the reaction iodide(out) = iodide(in). The enzyme catalyses chloride(in) = chloride(out). It carries out the reaction bromide(in) = bromide(out). The catalysed reaction is fluoride(in) = fluoride(out). Functionally, voltage-gated channel that enables the transfer of anions such as iodide, chloride, bromide and fluoride which may function in counter-ion conductance and participates in Golgi acidification. Plays a role in lymphocyte development, probably by acting as a RABL3 effector in hematopoietic cells. In Cricetulus griseus (Chinese hamster), this protein is Golgi pH regulator.